Reading from the N-terminus, the 882-residue chain is Alanine--tRNA ligase (882 aa).

Zn(2+) contacts are provided by H568, H572, C670, and H674.

The protein belongs to the class-II aminoacyl-tRNA synthetase family. Requires Zn(2+) as cofactor.

It localises to the cytoplasm. The catalysed reaction is tRNA(Ala) + L-alanine + ATP = L-alanyl-tRNA(Ala) + AMP + diphosphate. Functionally, catalyzes the attachment of alanine to tRNA(Ala) in a two-step reaction: alanine is first activated by ATP to form Ala-AMP and then transferred to the acceptor end of tRNA(Ala). Also edits incorrectly charged Ser-tRNA(Ala) and Gly-tRNA(Ala) via its editing domain. This is Alanine--tRNA ligase from Lactobacillus gasseri (strain ATCC 33323 / DSM 20243 / BCRC 14619 / CIP 102991 / JCM 1131 / KCTC 3163 / NCIMB 11718 / NCTC 13722 / AM63).